Consider the following 75-residue polypeptide: MAFLKKSLFLVLLLGLISLSICEEEKRENEVEEEQEDDEQSELRRSLWSKIKEMAATAGKAALNAVTGMVNQGEQ.

The signal sequence occupies residues Met1–Cys22. Residues Glu23–Leu43 constitute a propeptide that is removed on maturation. Gln72 bears the Glutamine amide mark. The propeptide occupies Glu74–Gln75.

This sequence belongs to the frog skin active peptide (FSAP) family. Dermaseptin subfamily. Expressed by the skin glands.

The protein resides in the secreted. In terms of biological role, possesses a potent antimicrobial activity against Gram-positive and Gram-negative bacteria. Probably acts by disturbing membrane functions with its amphipathic structure. This is Dermaseptin-A3 from Agalychnis annae (Blue-sided leaf frog).